A 259-amino-acid chain; its full sequence is MAASALGRMCGAAREKLSPGPGARGLGALARSLVLALLLVPVLCSDRSENPPNNATVSSPVVVTAPGNHTSPSVSQISTTLSPASAEKSGSSSAAPTPTAAPSAPEEEADSNEDPSMEEEDLLALNSSPATGKDTLDNGDYGEPDYDWTTNPRDEEPEDINIAISKESRRFRGFQDSVEVVKLPPPNREDSHFFFHLLIFAFCAAVVYVTYHNKRKIFLLVQSRKWRDGLCSKTVEYHRLDQNVNEAMPSLKITNDYIF.

A signal peptide spans 1–44 (MAASALGRMCGAAREKLSPGPGARGLGALARSLVLALLLVPVLC). At 45–190 (SDRSENPPNN…VKLPPPNRED (146 aa)) the chain is on the extracellular side. The disordered stretch occupies residues 47–155 (RSENPPNNAT…YDWTTNPRDE (109 aa)). Polar residues predominate over residues 50 to 81 (NPPNNATVSSPVVVTAPGNHTSPSVSQISTTL). N54 and N68 each carry an N-linked (GlcNAc...) asparagine glycan. Low complexity predominate over residues 82 to 104 (SPASAEKSGSSSAAPTPTAAPSA). Acidic residues predominate over residues 105-122 (PEEEADSNEDPSMEEEDL). S165 carries the post-translational modification Phosphoserine. The chain crosses the membrane as a helical span at residues 191–211 (SHFFFHLLIFAFCAAVVYVTY). At 212 to 259 (HNKRKIFLLVQSRKWRDGLCSKTVEYHRLDQNVNEAMPSLKITNDYIF) the chain is on the cytoplasmic side. A phosphoserine mark is found at S223 and S250.

It localises to the membrane. This is Keratinocyte-associated transmembrane protein 2 (Kct2) from Mus musculus (Mouse).